Consider the following 519-residue polypeptide: Cytosol aminopeptidase (519 aa).

Lys45 bears the N6-succinyllysine mark. Ser54 carries the phosphoserine modification. 2 positions are modified to N6-succinyllysine: Lys61 and Lys103. Phosphoserine is present on residues Ser180 and Ser194. Zn(2+) is bound by residues Leu202 and Met203. N6-acetyllysine; alternate is present on Lys221. An N6-succinyllysine; alternate modification is found at Lys221. Position 238 is a phosphoserine (Ser238). Residues Lys282 and Asp287 each coordinate Zn(2+). Residues Lys282, Asp287, Ser292, and Lys294 each contribute to the substrate site. A Mg(2+)-binding site is contributed by Asp287. Residue Lys294 is part of the active site. 4 residues coordinate Zn(2+): Arg303, Asp305, Asp364, and Glu366. Positions 305 and 364 each coordinate substrate. Residues Asp364 and Glu366 each contribute to the Mg(2+) site. Residue Arg368 is part of the active site. Lys455 is modified (N6-acetyllysine; alternate). Residue Lys455 is modified to N6-succinyllysine; alternate. Position 476 is an N6-succinyllysine (Lys476). The residue at position 489 (Lys489) is an N6-acetyllysine; alternate. Lys489 carries the N6-succinyllysine; alternate modification.

This sequence belongs to the peptidase M17 family. Homohexamer. Requires Zn(2+) as cofactor. Mn(2+) serves as cofactor.

It is found in the cytoplasm. The enzyme catalyses Release of an N-terminal amino acid, Xaa-|-Yaa-, in which Xaa is preferably Leu, but may be other amino acids including Pro although not Arg or Lys, and Yaa may be Pro. Amino acid amides and methyl esters are also readily hydrolyzed, but rates on arylamides are exceedingly low.. It carries out the reaction an S-substituted L-cysteinylglycine + H2O = an S-substituted L-cysteine + glycine. It catalyses the reaction L-cysteinylglycine + H2O = L-cysteine + glycine. The catalysed reaction is S-benzyl-L-cysteinylglycine + H2O = S-benzyl-L-cysteine + glycine. The enzyme catalyses Release of N-terminal proline from a peptide.. Its function is as follows. Cytosolic metallopeptidase that catalyzes the removal of unsubstituted N-terminal hydrophobic amino acids from various peptides. The presence of Zn(2+) ions is essential for the peptidase activity, and the association with other cofactors can modulate the substrate spectificity of the enzyme. For instance, in the presence of Mn(2+), it displays a specific Cys-Gly hydrolyzing activity of Cys-Gly-S-conjugates. Involved in the metabolism of glutathione and in the degradation of glutathione S-conjugates, which may play a role in the control of the cell redox status. The chain is Cytosol aminopeptidase from Mus musculus (Mouse).